The primary structure comprises 366 residues: Chorismate synthase (366 aa).

Residue Arg-48 participates in NADP(+) binding. Residues 125 to 127, 241 to 242, Gly-285, 300 to 304, and Arg-326 each bind FMN; these read RSS, NA, and KPTSS.

The protein belongs to the chorismate synthase family. Homotetramer. It depends on FMNH2 as a cofactor.

It catalyses the reaction 5-O-(1-carboxyvinyl)-3-phosphoshikimate = chorismate + phosphate. It functions in the pathway metabolic intermediate biosynthesis; chorismate biosynthesis; chorismate from D-erythrose 4-phosphate and phosphoenolpyruvate: step 7/7. Catalyzes the anti-1,4-elimination of the C-3 phosphate and the C-6 proR hydrogen from 5-enolpyruvylshikimate-3-phosphate (EPSP) to yield chorismate, which is the branch point compound that serves as the starting substrate for the three terminal pathways of aromatic amino acid biosynthesis. This reaction introduces a second double bond into the aromatic ring system. The sequence is that of Chorismate synthase from Paracoccus denitrificans (strain Pd 1222).